The following is a 320-amino-acid chain: Methionyl-tRNA formyltransferase (320 aa).

112 to 115 (SILP) provides a ligand contact to (6S)-5,6,7,8-tetrahydrofolate.

The protein belongs to the Fmt family.

The catalysed reaction is L-methionyl-tRNA(fMet) + (6R)-10-formyltetrahydrofolate = N-formyl-L-methionyl-tRNA(fMet) + (6S)-5,6,7,8-tetrahydrofolate + H(+). In terms of biological role, attaches a formyl group to the free amino group of methionyl-tRNA(fMet). The formyl group appears to play a dual role in the initiator identity of N-formylmethionyl-tRNA by promoting its recognition by IF2 and preventing the misappropriation of this tRNA by the elongation apparatus. This is Methionyl-tRNA formyltransferase from Shewanella woodyi (strain ATCC 51908 / MS32).